The sequence spans 67 residues: DNA gyrase inhibitor YacG (67 aa).

Zn(2+) is bound by residues Cys9, Cys12, Cys28, and Cys32. Residues 48–67 (PVSPDAEDELFSEELPPRAH) are disordered.

It belongs to the DNA gyrase inhibitor YacG family. In terms of assembly, interacts with GyrB. Requires Zn(2+) as cofactor.

Inhibits all the catalytic activities of DNA gyrase by preventing its interaction with DNA. Acts by binding directly to the C-terminal domain of GyrB, which probably disrupts DNA binding by the gyrase. The protein is DNA gyrase inhibitor YacG of Pseudomonas fluorescens (strain ATCC BAA-477 / NRRL B-23932 / Pf-5).